Here is a 339-residue protein sequence, read N- to C-terminus: Putative phosphate acyltransferase (339 aa).

Belongs to the PlsX family. As to quaternary structure, homodimer. Probably interacts with PlsY.

It localises to the cytoplasm. The catalysed reaction is a fatty acyl-[ACP] + phosphate = an acyl phosphate + holo-[ACP]. It functions in the pathway lipid metabolism; phospholipid metabolism. Functionally, catalyzes the reversible formation of acyl-phosphate (acyl-PO(4)) from acyl-[acyl-carrier-protein] (acyl-ACP). This enzyme utilizes acyl-ACP as fatty acyl donor, but not acyl-CoA. This chain is Putative phosphate acyltransferase, found in Clostridium perfringens (strain 13 / Type A).